A 194-amino-acid polypeptide reads, in one-letter code: Probable nicotinate-nucleotide adenylyltransferase (194 aa).

Belongs to the NadD family.

It catalyses the reaction nicotinate beta-D-ribonucleotide + ATP + H(+) = deamido-NAD(+) + diphosphate. It participates in cofactor biosynthesis; NAD(+) biosynthesis; deamido-NAD(+) from nicotinate D-ribonucleotide: step 1/1. Functionally, catalyzes the reversible adenylation of nicotinate mononucleotide (NaMN) to nicotinic acid adenine dinucleotide (NaAD). The protein is Probable nicotinate-nucleotide adenylyltransferase of Chlorobium luteolum (strain DSM 273 / BCRC 81028 / 2530) (Pelodictyon luteolum).